Reading from the N-terminus, the 305-residue chain is Tyrosine recombinase XerC (305 aa).

Positions 4–95 (TSIQALINKW…AVKNFYRFLE (92 aa)) constitute a Core-binding (CB) domain. The 183-residue stretch at 116–298 (LLPKALSEDD…SIKHLEAVYT (183 aa)) folds into the Tyr recombinase domain. Catalysis depends on residues R159, K182, H250, R253, and H276. The active-site O-(3'-phospho-DNA)-tyrosine intermediate is Y285.

The protein belongs to the 'phage' integrase family. XerC subfamily. As to quaternary structure, forms a cyclic heterotetrameric complex composed of two molecules of XerC and two molecules of XerD.

The protein localises to the cytoplasm. Site-specific tyrosine recombinase, which acts by catalyzing the cutting and rejoining of the recombining DNA molecules. The XerC-XerD complex is essential to convert dimers of the bacterial chromosome into monomers to permit their segregation at cell division. It also contributes to the segregational stability of plasmids. The polypeptide is Tyrosine recombinase XerC (Rickettsia massiliae (strain Mtu5)).